The sequence spans 325 residues: Aminotransferase tasG (325 aa).

Position 35 (Gly-35) interacts with substrate. Pyridoxal 5'-phosphate-binding positions include 89–90, Asn-143, Tyr-174, and 203–205; these read TW and SFA. Position 143 (Asn-143) interacts with substrate. N6-(pyridoxal phosphate)lysine is present on Lys-206. Arg-214 provides a ligand contact to pyridoxal 5'-phosphate.

This sequence belongs to the class-I pyridoxal-phosphate-dependent aminotransferase family. Homodimer. It depends on pyridoxal 5'-phosphate as a cofactor.

It functions in the pathway secondary metabolite biosynthesis. Aminotransferase; part of the gene cluster that mediates the biosynthesis of the tetramic acids Sch210971 and Sch210972, potential anti-HIV fungal natural product that contain a decalin core. The PKS module of tasS together with the enoylreductase tasC catalyze the formation of the polyketide unit which is then conjugated to 4-hydroxyl-4-methyl glutamate (HMG) by the condensation domain of the tasS NRPS module. One unique structural feature of Sch210971 and Sch210972 is the tetramic acid motif proposed to be derived from the non-proteinogenic amino acid HMG, by a Dieckmann-type condensation catalyzed by the reductase domain of tasS. The aldolase tasA catalyzes the aldol condensation of 2 molecules of pyruvic acid to yield the intermediate 4-hydroxyl-4-methyl-2-oxoglutarate (HMOG), which can then be stereoselectively transaminated, may be by tasG, to form HMG. The Diels-Alderase tas3 then uses the Dieckmann product of tasS as substrate and catalyzes the Diels-Alder cycloaddition to form the decalin ring of Sch210971 and Sch210972. This is Aminotransferase tasG from Hapsidospora irregularis.